A 285-amino-acid chain; its full sequence is MPNTMQALHTRPLNENLITKSLTAADYVATLDAMLSRTLERISLKKEQGLRTPDELWIVDHNDVYTLGQAGKEEHILQRTNTPIIKTDRGGQVTWHGHGQLVMYWLFDLDSISWSVRNMVSHAEQAIEDVVNDCLKSTASTDTNHISARARRDAPGVYLYADMATETDSAPTSDEIEVDNTIMIGKIASLGFKIKHGFSYHGIAINLDCDLSAFNAINPCGYAGMQMLRLADFVNMNQATNIQPNNLPLTDDKKTLTYEQFTQQLIDNIAQRHAGDIPLRELAPK.

Residues L50 to I277 form the BPL/LPL catalytic domain. Substrate-binding positions include R89 to H96, S189 to G191, and G202 to A204. C220 serves as the catalytic Acyl-thioester intermediate.

This sequence belongs to the LipB family.

It localises to the cytoplasm. It carries out the reaction octanoyl-[ACP] + L-lysyl-[protein] = N(6)-octanoyl-L-lysyl-[protein] + holo-[ACP] + H(+). It participates in protein modification; protein lipoylation via endogenous pathway; protein N(6)-(lipoyl)lysine from octanoyl-[acyl-carrier-protein]: step 1/2. Catalyzes the transfer of endogenously produced octanoic acid from octanoyl-acyl-carrier-protein onto the lipoyl domains of lipoate-dependent enzymes. Lipoyl-ACP can also act as a substrate although octanoyl-ACP is likely to be the physiological substrate. The polypeptide is Octanoyltransferase (Psychrobacter cryohalolentis (strain ATCC BAA-1226 / DSM 17306 / VKM B-2378 / K5)).